The sequence spans 345 residues: Methylthioribose-1-phosphate isomerase (345 aa).

Substrate is bound by residues 47–49, arginine 90, and glutamine 197; that span reads RGA. The Proton donor role is filled by aspartate 238. Residue 248–249 coordinates substrate; it reads NK.

This sequence belongs to the eIF-2B alpha/beta/delta subunits family. MtnA subfamily.

The enzyme catalyses 5-(methylsulfanyl)-alpha-D-ribose 1-phosphate = 5-(methylsulfanyl)-D-ribulose 1-phosphate. The protein operates within amino-acid biosynthesis; L-methionine biosynthesis via salvage pathway; L-methionine from S-methyl-5-thio-alpha-D-ribose 1-phosphate: step 1/6. Catalyzes the interconversion of methylthioribose-1-phosphate (MTR-1-P) into methylthioribulose-1-phosphate (MTRu-1-P). The sequence is that of Methylthioribose-1-phosphate isomerase from Thermoanaerobacter pseudethanolicus (strain ATCC 33223 / 39E) (Clostridium thermohydrosulfuricum).